The chain runs to 320 residues: Olfactory receptor 13C8 (320 aa).

The Extracellular portion of the chain corresponds to 1 to 25 (MERTNDSTSTEFFLVGLSAHPKLQT). Asn5 carries an N-linked (GlcNAc...) asparagine glycan. The helical transmembrane segment at 26–46 (VFFVLILWMYLMILLGNGVLI) threads the bilayer. Residues 47 to 54 (SVIIFDSH) lie on the Cytoplasmic side of the membrane. A helical membrane pass occupies residues 55 to 75 (LHTPMYFFLCNLSFLDVCYTS). The Extracellular portion of the chain corresponds to 76–99 (SSVPLILASFLAVKKKVSFSGCMV). A disulfide bridge links Cys97 with Cys189. The chain crosses the membrane as a helical span at residues 100–120 (QMFISFAMGATECMILGTMAL). At 121-139 (DRYVAICYPLRYPVIMSKG) the chain is on the cytoplasmic side. The helical transmembrane segment at 140–160 (AYVAMAAGSWVTGLVDSVVQT) threads the bilayer. Residues 161-197 (AFAMQLPFCANNVIKHFVCEILAILKLACADISINVI) are Extracellular-facing. Residues 198–217 (SMTGSNLIVLVIPLLVISIS) form a helical membrane-spanning segment. Over 218–237 (YIFIVATILRIPSTEGKHKA) the chain is Cytoplasmic. The helical transmembrane segment at 238–258 (FSTCSAHLTVVIIFYGTIFFM) threads the bilayer. The Extracellular segment spans residues 259–277 (YAKPESKASVDSGNEDIIE). A helical membrane pass occupies residues 278–298 (ALISLFYGVMTPMLNPLIYSL). Residues 299 to 320 (RNKDVKAAVKNILCRKNFSDGK) are Cytoplasmic-facing.

This sequence belongs to the G-protein coupled receptor 1 family.

The protein localises to the cell membrane. Odorant receptor. This is Olfactory receptor 13C8 (OR13C8) from Homo sapiens (Human).